The chain runs to 454 residues: Response regulator PleD (454 aa).

2 consecutive Response regulatory domains span residues 4-120 (RILV…RSLT) and 155-269 (RVLI…KTQI). Mg(2+) is bound by residues aspartate 9, aspartate 10, aspartate 53, and methionine 55. Aspartate 53 carries the 4-aspartylphosphate modification. A GGDEF domain is found at 319–454 (DPVSALLIDI…GRNAVVGKAA (136 aa)). Substrate is bound by residues asparagine 335 and aspartate 344. Residue glutamate 370 is the Proton acceptor of the active site.

In terms of assembly, homodimer. Inactive monomer in solution. Phosphorylated by PleC and DivJ. Phosphorylation stimulates cyclase activity.

The protein localises to the cytoplasm. The enzyme catalyses 2 GTP = 3',3'-c-di-GMP + 2 diphosphate. Its pathway is purine metabolism; 3',5'-cyclic di-GMP biosynthesis. Allosterically inhibited by the product c-di-GMP. Functionally, response regulator that is part of a signal transduction pathway controlling cell differentiation in the swarmer-to-stalked cell transition. Its function is as follows. Catalyzes the condensation of two GTP molecules to the cyclic dinucleotide di-GMP (c-di-GMP), which acts as a secondary messenger. In Caulobacter vibrioides (strain ATCC 19089 / CIP 103742 / CB 15) (Caulobacter crescentus), this protein is Response regulator PleD (pleD).